Reading from the N-terminus, the 49-residue chain is Large ribosomal subunit protein bL33A (49 aa).

Belongs to the bacterial ribosomal protein bL33 family.

This chain is Large ribosomal subunit protein bL33A, found in Lactobacillus johnsonii (strain CNCM I-12250 / La1 / NCC 533).